The primary structure comprises 108 residues: UPF0145 protein Acel_2109 (108 aa).

The protein belongs to the UPF0145 family.

This is UPF0145 protein Acel_2109 from Acidothermus cellulolyticus (strain ATCC 43068 / DSM 8971 / 11B).